We begin with the raw amino-acid sequence, 133 residues long: MAKASTSGASRVRKKVKKNVSDGIAHVHASFNNTIITITDRQGNALSWATSGGAGFKGSRKSTPFAAQVAAETAGRVALEYGIKTLEVRIKGPGPGRESSVRALNALGIKISSIADITPVPHNGCRPPKRRRI.

The protein belongs to the universal ribosomal protein uS11 family. As to quaternary structure, part of the 30S ribosomal subunit. Interacts with proteins S7 and S18. Binds to IF-3.

Functionally, located on the platform of the 30S subunit, it bridges several disparate RNA helices of the 16S rRNA. Forms part of the Shine-Dalgarno cleft in the 70S ribosome. The polypeptide is Small ribosomal subunit protein uS11 (Bordetella petrii (strain ATCC BAA-461 / DSM 12804 / CCUG 43448)).